The sequence spans 143 residues: Large ribosomal subunit protein uL11 (143 aa).

It belongs to the universal ribosomal protein uL11 family. Part of the ribosomal stalk of the 50S ribosomal subunit. Interacts with L10 and the large rRNA to form the base of the stalk. L10 forms an elongated spine to which L12 dimers bind in a sequential fashion forming a multimeric L10(L12)X complex. One or more lysine residues are methylated.

Its function is as follows. Forms part of the ribosomal stalk which helps the ribosome interact with GTP-bound translation factors. The protein is Large ribosomal subunit protein uL11 of Herminiimonas arsenicoxydans.